Consider the following 462-residue polypeptide: Polygalacturonase (462 aa).

Positions Met1–Thr22 are cleaved as a signal peptide. Residue Asn173 is glycosylated (N-linked (GlcNAc...) asparagine). Residue Asp278 is the Proton donor of the active site. Cys280 and Cys297 are joined by a disulfide. An N-linked (GlcNAc...) asparagine glycan is attached at Asn294. Residue His301 is part of the active site. N-linked (GlcNAc...) asparagine glycosylation occurs at Asn358. 2 disulfides stabilise this stretch: Cys407–Cys413 and Cys435–Cys460.

Belongs to the glycosyl hydrolase 28 family.

The protein resides in the secreted. It is found in the cell wall. It catalyses the reaction (1,4-alpha-D-galacturonosyl)n+m + H2O = (1,4-alpha-D-galacturonosyl)n + (1,4-alpha-D-galacturonosyl)m.. In terms of biological role, acts in concert with the pectinesterase, in the ripening process. Is involved in cell wall metabolism, specifically in polyuronide degradation. The protein is Polygalacturonase of Persea americana (Avocado).